A 677-amino-acid polypeptide reads, in one-letter code: MFSPLIEVENLRREINRHNQLYYVQDNPEISDAQYDTLIRRLKELEEAHPELVTPDSPTQKVGAEPLKAFGIVNHPYPLLSLANAFSDTELEAWYQRVKKLLGNISFQIDCEPKMDGLAVALTYRNGKFATGATRGDGFQGENITRNLRTIHSIPLNAEPNAPPVFEVRGEVYLSKNGFAKLNRERADKGLPLFANPRNAAAGSLRQLDPSVTAERPLDIFIYALGYSEDSLLPDSHWQILDYFSKIGFRINPLNRLVNTMEEAKEYYRQMAANRASLPYEADGVVFKVDSVSLQHRLGDVGREPRWAIAYKFPAEQVMTRLKKIGISVGRTGTLNPFAVLEPVNVGGVVVKQAALHNEDDILRKDIREGDTVIIQRAGEVIPEVVAPVLSKRNPESKPFRMEESLFNPNLNRPACPVCGGEIYRPAGEAMHYCTNVSCPAQFERQLEHFVSRGAMDIRGIGESLSVILAQQGLVKNVSDLYYLTTADLLQLPRMGEKSADNIIDAIADSKTRPLDRVIFGLGVRHVGNETATLLSRHYGNIWALAKTGLGELQTIPDIGDKIASSIVAYFSEEKNVAVIRRLEEAGVRLTSDQKPVNKNMPFSGMEFVVTGKLESFSREEAQEKIRSLGGTAKDNVTKATSYLVVGADAGSKLAKARSMGVKELSEREFINMLEQS.

Residues 32–36 (DAQYD), 81–82 (SL), and E112 contribute to the NAD(+) site. The active-site N6-AMP-lysine intermediate is K114. Residues R135, E171, K288, and K312 each contribute to the NAD(+) site. Residues C416, C419, C434, and C439 each coordinate Zn(2+). One can recognise a BRCT domain in the interval 598–677 (NKNMPFSGME…REFINMLEQS (80 aa)).

This sequence belongs to the NAD-dependent DNA ligase family. LigA subfamily. Mg(2+) is required as a cofactor. It depends on Mn(2+) as a cofactor.

It carries out the reaction NAD(+) + (deoxyribonucleotide)n-3'-hydroxyl + 5'-phospho-(deoxyribonucleotide)m = (deoxyribonucleotide)n+m + AMP + beta-nicotinamide D-nucleotide.. In terms of biological role, DNA ligase that catalyzes the formation of phosphodiester linkages between 5'-phosphoryl and 3'-hydroxyl groups in double-stranded DNA using NAD as a coenzyme and as the energy source for the reaction. It is essential for DNA replication and repair of damaged DNA. This is DNA ligase from Dehalococcoides mccartyi (strain CBDB1).